The chain runs to 236 residues: MGVEGCTKCIKYLLFVFNFVFWLAGGVILGVALWLRHDPQTTSLLYLELGNKPAPNTFYVGIYILIAVGAVMMFVGFLGCYGAIQESQCLLGTFFTCLVILFACEVAAGIWGFVNKDQIAKDVKQFYDQALQQAVMDDDANNAKAVVKTFHETLNCCGSNALTTLTTTILRNSLCPSGGNILTPLLQQDCHQKIDELFSGKLYLIGIAAIVVAVIMIFEMILSMVLCCGIRNSSVY.

The Cytoplasmic segment spans residues 1-12; the sequence is MGVEGCTKCIKY. Residues 13-33 form a helical membrane-spanning segment; it reads LLFVFNFVFWLAGGVILGVAL. The Extracellular segment spans residues 34-63; that stretch reads WLRHDPQTTSLLYLELGNKPAPNTFYVGIY. A helical transmembrane segment spans residues 64-84; that stretch reads ILIAVGAVMMFVGFLGCYGAI. Over 85–89 the chain is Cytoplasmic; it reads QESQC. A helical membrane pass occupies residues 90–112; sequence LLGTFFTCLVILFACEVAAGIWG. The Extracellular portion of the chain corresponds to 113 to 201; that stretch reads FVNKDQIAKD…QKIDELFSGK (89 aa). 2 disulfide bridges follow: C156/C190 and C157/C175. A helical transmembrane segment spans residues 202–224; that stretch reads LYLIGIAAIVVAVIMIFEMILSM. Position 219 (E219) interacts with cholesterol. At 225 to 236 the chain is on the cytoplasmic side; it reads VLCCGIRNSSVY.

Belongs to the tetraspanin (TM4SF) family. In terms of assembly, homodimer. Part of a complex composed of CD19, CR2/CD21, CD81 and IFITM1/CD225 in the membrane of mature B cells. Interacts (via the second extracellular domain) with CD19; this interaction is initiated early during biosynthesis in the ER and enables trafficking of only properly folded CD19. Part of a complex that includes MHC class II/HLA-DR molecules and IFITM1. Interacts with IFITM1. Interacts with IFITM2 and IFITM3. Part of integrin-tetraspanin complex composed of CD9, CD81, beta-1 and beta-2 integrins in the membrane of monocyte/macrophages. Interacts (via the second extracellular domain) with integrin ITGAV:ITGB3. Interacts with CD247/CD3 zeta, ICAM1 and CD9 at the immune synapse on T cell membrane. Part of a GPCR-tetraspanin complex consisting at least of ADGRG1, CD81, possibly CD9, and GNA11 in which CD81 enhances the association of ADGRG1 with GNA11. Part of a complex composed of CD9, CD81, PTGFRN and IGSF8. Interacts directly with IGSF8. Interacts with CD53 and SCIMP. Interacts with SAMHD1 (via its C-terminus). Interacts with glypican GPC3 and with the transcriptional repressor HHEX; binding to GPC3 decreases the availability of free CD81 for binding to HHEX, resulting in nuclear translocation of HHEX and transcriptional repression. Interacts with CLDN1. Interacts with CLDN6 and CLDN9. Post-translationally, not glycosylated. Likely constitutively palmitoylated at low levels. Protein palmitoylation is up-regulated upon coligation of BCR and CD9-C2R-CD81 complexes in lipid rafts. As to expression, expressed in oocytes (at protein level). Highly expressed in granulosa cells. Expressed in skeletal muscle mainly in endothelial cells of endomysial capillaries, in satellite cells and myoblasts (at protein level). Expressed in hepatocytes (at protein level).

Its subcellular location is the cell membrane. It is found in the basolateral cell membrane. Structural component of specialized membrane microdomains known as tetraspanin-enriched microdomains (TERMs), which act as platforms for receptor clustering and signaling. Essential for trafficking and compartmentalization of CD19 receptor on the cell surface of activated B cells. Upon initial encounter with a microbial pathogen, enables the assembly of CD19-CR2 and B cell receptor complexes at signaling TERMs, lowering the threshold dose of antigen required to trigger B cell clonal expansion and humoral immune response. In T cells, associates with CD4 or CD8 coreceptors and defines the maturation state of antigen-induced synapses with B cells. Facilitates localization of CD3 in these immune synapses, required for costimulation and sustained activation of T cells, preferentially triggering T helper type 2 immune response. Can act both as positive and negative regulator of homotypic or heterotypic cell-cell fusion processes. In myoblasts, associates with another tetraspanin CD9 in complex with PTGFRN and inhibits myotube fusion during muscle regeneration. In macrophages, associates with CD9 and beta-1 and beta-2 integrins, and prevents macrophage fusion into multinucleated giant cells specialized in ingesting complement-opsonized large particles. Also prevents the fusion between mononuclear cell progenitors into osteoclasts in charge of bone resorption. Positively regulates sperm-egg fusion and may be involved in the acrosome reaction. Regulates protein trafficking in intracellular compartments. In T cells, associates with dNTPase SAMHD1 and defines its subcellular location, enabling its degradation by the proteasome and thereby controlling intracellular dNTP levels. Also regulates integrin-dependent migration of macrophages, particularly relevant for inflammatory response in the lung. Its function is as follows. (Microbial infection) Specifically required for Plasmodium yoelii infectivity of hepatocytes, controlling sporozoite entry in hepatocytes via the parasitophorous vacuole and subsequent parasite differentiation to exoerythrocytic forms. The protein is CD81 antigen of Mus musculus (Mouse).